The following is an 81-amino-acid chain: MTTTIFQQTNHTLDAIGLRCPEPVMMVRMNIRKIASGETLLIKCDDPSTARDIPSFCRFMEHELLAKQTDTLPFLYVIKKN.

Catalysis depends on cysteine 20, which acts as the Cysteine persulfide intermediate.

Belongs to the sulfur carrier protein TusA family.

It localises to the cytoplasm. Sulfur carrier protein which probably makes part of a sulfur-relay system. The chain is Sulfur carrier protein TusA from Colwellia psychrerythraea (strain 34H / ATCC BAA-681) (Vibrio psychroerythus).